Consider the following 468-residue polypeptide: MTQQIGVIGLAVMGKNLAWNIESRGYSVSVFNRSSEKTDLMVEESKGKNIHPTYSLEEFVNSLEKPRKILLMVQAGKATDATIDSLLPLLDDGDILIDGGNTNYQDTIRRNKALAQSAINFIGMGVSGGEIGALTGPSLMPGGQEEAYNKVADILDAIAAKAKDGASCVTYIGPNGAGHYVKMVHNGIEYADMQLIAESYAMMKELLGMSHEDIAQTFKDWNAGELESYLIEITGDIFMKLDENKEALVEKILDTAGQKGTGKWTSINALELGIPLTIITESVFARFISSIKEERVNASKELNGPKASFDGDKKDFLEKIRKALYMSKICSYAQGFAQMRKASEDNEWNLKLGDLAMIWREGCIIRAQFLQKIKDAYDNNPGLQNLLLDPYFKNIVTEYQDALRDVVATGVQNGVPTPGFSSSINYYDSYRAADLPANLIQAQRDYFGAHTYERKDKEGVFHTQWIEE.

Residues 9–14 (GLAVMG), 32–34 (NRS), 73–75 (VQA), and asparagine 101 contribute to the NADP(+) site. Substrate contacts are provided by residues asparagine 101 and 127 to 129 (SGG). Lysine 182 (proton acceptor) is an active-site residue. Residue 185–186 (HN) coordinates substrate. Glutamate 189 functions as the Proton donor in the catalytic mechanism. Substrate is bound by residues tyrosine 190, lysine 259, arginine 286, arginine 444, and histidine 450.

This sequence belongs to the 6-phosphogluconate dehydrogenase family. Homodimer.

It carries out the reaction 6-phospho-D-gluconate + NADP(+) = D-ribulose 5-phosphate + CO2 + NADPH. The protein operates within carbohydrate degradation; pentose phosphate pathway; D-ribulose 5-phosphate from D-glucose 6-phosphate (oxidative stage): step 3/3. Its function is as follows. Catalyzes the oxidative decarboxylation of 6-phosphogluconate to ribulose 5-phosphate and CO(2), with concomitant reduction of NADP to NADPH. This chain is 6-phosphogluconate dehydrogenase, decarboxylating (gnd), found in Staphylococcus aureus (strain COL).